We begin with the raw amino-acid sequence, 178 residues long: Cytochrome b6-f complex iron-sulfur subunit (178 aa).

A helical transmembrane segment spans residues 20–42 (LLTFGTATGVALGALYPVANYFM). Residues 65-161 (KTGWLANHQA…VDVDDDAVLV (97 aa)) enclose the Rieske domain. [2Fe-2S] cluster-binding residues include Cys107, His109, Cys125, and His128. The cysteines at positions 112 and 127 are disulfide-linked.

Belongs to the Rieske iron-sulfur protein family. The 4 large subunits of the cytochrome b6-f complex are cytochrome b6, subunit IV (17 kDa polypeptide, PetD), cytochrome f and the Rieske protein, while the 4 small subunits are PetG, PetL, PetM and PetN. The complex functions as a dimer. Requires [2Fe-2S] cluster as cofactor.

Its subcellular location is the cellular thylakoid membrane. It catalyses the reaction 2 oxidized [plastocyanin] + a plastoquinol + 2 H(+)(in) = 2 reduced [plastocyanin] + a plastoquinone + 4 H(+)(out). Component of the cytochrome b6-f complex, which mediates electron transfer between photosystem II (PSII) and photosystem I (PSI), cyclic electron flow around PSI, and state transitions. The polypeptide is Cytochrome b6-f complex iron-sulfur subunit (Prochlorococcus marinus (strain MIT 9515)).